Here is a 257-residue protein sequence, read N- to C-terminus: Tryptophan synthase alpha chain (257 aa).

Residues Glu-51 and Asp-62 each act as proton acceptor in the active site.

The protein belongs to the TrpA family. As to quaternary structure, tetramer of two alpha and two beta chains.

It catalyses the reaction (1S,2R)-1-C-(indol-3-yl)glycerol 3-phosphate + L-serine = D-glyceraldehyde 3-phosphate + L-tryptophan + H2O. It functions in the pathway amino-acid biosynthesis; L-tryptophan biosynthesis; L-tryptophan from chorismate: step 5/5. Functionally, the alpha subunit is responsible for the aldol cleavage of indoleglycerol phosphate to indole and glyceraldehyde 3-phosphate. The polypeptide is Tryptophan synthase alpha chain (Nitratidesulfovibrio vulgaris (strain DP4) (Desulfovibrio vulgaris)).